Here is a 962-residue protein sequence, read N- to C-terminus: RNA-binding protein 15 (962 aa).

3 stretches are compositionally biased toward basic and acidic residues: residues 1 to 10 (MRSAGREPLP), 34 to 52 (LRRD…ERSP), and 59 to 72 (RGGE…ERSK). The segment at 1–167 (MRSAGREPLP…SAPGGGDGVE (167 aa)) is disordered. Over residues 82-94 (GSSSGKTDSGGSR) the composition is skewed to low complexity. Over residues 97–112 (LHLDKSSSRGGSREYE) the composition is skewed to basic and acidic residues. The residue at position 108 (Ser-108) is a Phosphoserine. Residues 118-129 (SSSRLHSYSSPS) are compositionally biased toward low complexity. Over residues 134 to 149 (SGGGESRSSSRGGGGE) the composition is skewed to gly residues. The span at 150–159 (SRSSGAASSA) shows a compositional bias: low complexity. The RRM 1 domain maps to 169-251 (KTLKISELGS…RPLKIEAVYV (83 aa)). Residues Ser-178, Ser-207, and Ser-209 each carry the phosphoserine modification. Residue Lys-245 forms a Glycyl lysine isopeptide (Lys-Gly) (interchain with G-Cter in SUMO2) linkage. Residues Ser-252, Ser-256, and Ser-258 each carry the phosphoserine modification. The segment at 257–297 (RSPLDKDAYAPSSSVVGTSVGSHRHAPGGGGGQRSLSPGGA) is disordered. Tyr-265 is subject to Phosphotyrosine. Residues 268 to 277 (SSSVVGTSVG) are compositionally biased toward low complexity. 3 positions are modified to phosphoserine: Ser-291, Ser-293, and Ser-364. 2 consecutive RRM domains span residues 373 to 450 (RTLF…YGKA) and 454 to 528 (TRLW…FADT). Glycyl lysine isopeptide (Lys-Gly) (interchain with G-Cter in SUMO2) cross-links involve residues Lys-405, Lys-419, and Lys-444. Lys-449 is modified (N6-acetyllysine). Basic and acidic residues-rich tracts occupy residues 553–580 (GHRA…RDLY) and 612–661 (SLDR…SERP). The interval 553 to 779 (GHRAPDPLRS…KQDGGTAPVA (227 aa)) is disordered. Thr-567 carries the post-translational modification Phosphothreonine. Position 577 is an asymmetric dimethylarginine; alternate; by PRMT1 (Arg-577). Arg-577 carries the omega-N-methylarginine; alternate; by PRMT1 modification. Ser-621, Ser-655, Ser-670, Ser-674, and Ser-701 each carry phosphoserine. 3 stretches are compositionally biased toward basic and acidic residues: residues 673 to 692 (RSPE…DRSS), 701 to 729 (SPVR…AERD), and 742 to 751 (NPLKKEDRSD). Lys-745 is covalently cross-linked (Glycyl lysine isopeptide (Lys-Gly) (interchain with G-Cter in SUMO2)). Residues 754 to 771 (APSASTSSSKQKPPSQKQ) show a composition bias toward low complexity. Phosphoserine occurs at positions 768 and 782. In terms of domain architecture, SPOC spans 778–957 (VAASSPKLCL…YLVMIIVRAK (180 aa)). Residues 866–885 (GSSDSRSSSSSATSDTAAST) are disordered. Residues 867–885 (SSDSRSSSSSATSDTAAST) show a composition bias toward low complexity. Residue Ser-936 is modified to Phosphoserine.

It belongs to the RRM Spen family. In terms of assembly, component of the WMM complex, a N6-methyltransferase complex composed of a catalytic subcomplex, named MAC, and of an associated subcomplex, named MACOM. The MAC subcomplex is composed of METTL3 and METTL14. The MACOM subcomplex is composed of WTAP, ZC3H13, CBLL1/HAKAI, VIRMA, and, in some cases of RBM15 (RBM15 or RBM15B). Also a component of a MACOM-like complex, named WTAP complex, composed of WTAP, ZC3H13, CBLL1, VIRMA, RBM15, BCLAF1 and THRAP3. Interacts with RBPJ. Interacts (via SPOC domain) with SETD1B. Interacts with NXF1, the interaction is required to promote mRNA export. Interacts with SF3B1. In terms of processing, methylated at Arg-577 by PRMT1, leading to promote ubiquitination by CNOT4 and subsequent degradation by the proteasome. Post-translationally, ubiquitinated by CNOT4 following methylation at Arg-577 by PRMT1.

It localises to the nucleus speckle. The protein localises to the nucleus. The protein resides in the nucleoplasm. Its subcellular location is the nucleus envelope. It is found in the nucleus membrane. In terms of biological role, RNA-binding protein that acts as a key regulator of N6-methyladenosine (m6A) methylation of RNAs, thereby regulating different processes, such as hematopoietic cell homeostasis, alternative splicing of mRNAs and X chromosome inactivation mediated by Xist RNA. Associated component of the WMM complex, a complex that mediates N6-methyladenosine (m6A) methylation of RNAs, a modification that plays a role in the efficiency of mRNA splicing and RNA processing. Plays a key role in m6A methylation, possibly by binding target RNAs and recruiting the WMM complex. Involved in random X inactivation mediated by Xist RNA: acts by binding Xist RNA and recruiting the WMM complex, which mediates m6A methylation, leading to target YTHDC1 reader on Xist RNA and promoting transcription repression activity of Xist. Required for the development of multiple tissues, such as the maintenance of the homeostasis of long-term hematopoietic stem cells and for megakaryocyte (MK) and B-cell differentiation. Regulates megakaryocyte differentiation by regulating alternative splicing of genes important for megakaryocyte differentiation; probably regulates alternative splicing via m6A regulation. Required for placental vascular branching morphogenesis and embryonic development of the heart and spleen. Acts as a regulator of thrombopoietin response in hematopoietic stem cells by regulating alternative splicing of MPL. May also function as an mRNA export factor, stimulating export and expression of RTE-containing mRNAs which are present in many retrotransposons that require to be exported prior to splicing. High affinity binding of pre-mRNA to RBM15 may allow targeting of the mRNP to the export helicase DBP5 in a manner that is independent of splicing-mediated NXF1 deposition, resulting in export prior to splicing. May be implicated in HOX gene regulation. The protein is RNA-binding protein 15 of Mus musculus (Mouse).